Here is a 406-residue protein sequence, read N- to C-terminus: DAZ-associated protein 1 (406 aa).

Methionine 1 carries the N-acetylmethionine modification. 2 RRM domains span residues 10-97 (GKLF…RTRP) and 113-190 (NKIF…RAEP). The segment at 74–117 (TLDGRNIDPKPCTPRGMQPERTRPKEGWQKGPRSDSSKSNKIFV) is disordered. Basic and acidic residues predominate over residues 91–111 (QPERTRPKEGWQKGPRSDSSK). Lysine 150 is modified (N6-acetyllysine). The tract at residues 186–406 (KRAEPRDSKN…NVQGFHPYRR (221 aa)) is disordered. The span at 195 to 207 (NQAPGQPGASQWG) shows a compositional bias: polar residues. The span at 247–262 (GPPPAGRGAPPPPPPF) shows a compositional bias: pro residues. Position 253 is an omega-N-methylarginine (arginine 253). Low complexity predominate over residues 280–294 (FPQGYGAPPQFSFGY). Pro residues predominate over residues 295–315 (GPPPPPPDQFAPPGVPPPPAT). A compositionally biased stretch (low complexity) spans 363–378 (SDPSQQPPSYGGPSVP). The segment covering 379–392 (GSGGPPAGGSGFGR) has biased composition (gly residues).

In terms of assembly, interacts with DAZ and DAZL. Acetylation at Lys-150 is predominantly observed in the nuclear fraction, and may regulate nucleocytoplasmic transport. As to expression, mainly expressed in testis. Expressed at much lower level in liver, heart and brain. Also expressed in ovary. Expressed throughout testes development, in both the prenatal and postnatal periods.

The protein localises to the cytoplasm. It is found in the nucleus. In terms of biological role, RNA-binding protein, which may be required during spermatogenesis. This Mus musculus (Mouse) protein is DAZ-associated protein 1 (Dazap1).